We begin with the raw amino-acid sequence, 285 residues long: Bis(5'-nucleosyl)-tetraphosphatase, symmetrical (285 aa).

It belongs to the Ap4A hydrolase family.

It catalyses the reaction P(1),P(4)-bis(5'-adenosyl) tetraphosphate + H2O = 2 ADP + 2 H(+). Hydrolyzes diadenosine 5',5'''-P1,P4-tetraphosphate to yield ADP. The sequence is that of Bis(5'-nucleosyl)-tetraphosphatase, symmetrical from Colwellia psychrerythraea (strain 34H / ATCC BAA-681) (Vibrio psychroerythus).